A 156-amino-acid polypeptide reads, in one-letter code: 6,7-dimethyl-8-ribityllumazine synthase (156 aa).

5-amino-6-(D-ribitylamino)uracil-binding positions include Phe-22, 56 to 58 (AFE), and 80 to 82 (VVI). 85–86 (ST) contacts (2S)-2-hydroxy-3-oxobutyl phosphate. The active-site Proton donor is His-88. A 5-amino-6-(D-ribitylamino)uracil-binding site is contributed by Phe-113. Arg-127 contributes to the (2S)-2-hydroxy-3-oxobutyl phosphate binding site.

It belongs to the DMRL synthase family.

The enzyme catalyses (2S)-2-hydroxy-3-oxobutyl phosphate + 5-amino-6-(D-ribitylamino)uracil = 6,7-dimethyl-8-(1-D-ribityl)lumazine + phosphate + 2 H2O + H(+). The protein operates within cofactor biosynthesis; riboflavin biosynthesis; riboflavin from 2-hydroxy-3-oxobutyl phosphate and 5-amino-6-(D-ribitylamino)uracil: step 1/2. In terms of biological role, catalyzes the formation of 6,7-dimethyl-8-ribityllumazine by condensation of 5-amino-6-(D-ribitylamino)uracil with 3,4-dihydroxy-2-butanone 4-phosphate. This is the penultimate step in the biosynthesis of riboflavin. In Streptococcus agalactiae serotype Ia (strain ATCC 27591 / A909 / CDC SS700), this protein is 6,7-dimethyl-8-ribityllumazine synthase.